Reading from the N-terminus, the 187-residue chain is Elongation factor P (187 aa).

This sequence belongs to the elongation factor P family.

It localises to the cytoplasm. The protein operates within protein biosynthesis; polypeptide chain elongation. In terms of biological role, involved in peptide bond synthesis. Stimulates efficient translation and peptide-bond synthesis on native or reconstituted 70S ribosomes in vitro. Probably functions indirectly by altering the affinity of the ribosome for aminoacyl-tRNA, thus increasing their reactivity as acceptors for peptidyl transferase. This Magnetococcus marinus (strain ATCC BAA-1437 / JCM 17883 / MC-1) protein is Elongation factor P.